The chain runs to 480 residues: Glycogen synthase (480 aa).

ADP-alpha-D-glucose is bound at residue Lys15.

Belongs to the glycosyltransferase 1 family. Bacterial/plant glycogen synthase subfamily.

The enzyme catalyses [(1-&gt;4)-alpha-D-glucosyl](n) + ADP-alpha-D-glucose = [(1-&gt;4)-alpha-D-glucosyl](n+1) + ADP + H(+). Its pathway is glycan biosynthesis; glycogen biosynthesis. Its function is as follows. Synthesizes alpha-1,4-glucan chains using ADP-glucose. This chain is Glycogen synthase, found in Pasteurella multocida (strain Pm70).